The following is a 740-amino-acid chain: Ion-translocating oxidoreductase complex subunit C (740 aa).

4Fe-4S ferredoxin-type domains are found at residues 369 to 397 (GEPQ…QQLY) and 407 to 436 (KATT…VQYF). Residues C377, C380, C383, C387, C416, C419, C422, and C426 each contribute to the [4Fe-4S] cluster site. A disordered region spans residues 602 to 684 (KLEQQQANAE…EPEEQVDPRK (83 aa)). Composition is skewed to low complexity over residues 605–615 (QQQANAEPEQQ) and 637–647 (QQQANAEPEQQ).

It belongs to the 4Fe4S bacterial-type ferredoxin family. RnfC subfamily. As to quaternary structure, the complex is composed of six subunits: RsxA, RsxB, RsxC, RsxD, RsxE and RsxG. [4Fe-4S] cluster serves as cofactor.

Its subcellular location is the cell inner membrane. In terms of biological role, part of a membrane-bound complex that couples electron transfer with translocation of ions across the membrane. Required to maintain the reduced state of SoxR. This chain is Ion-translocating oxidoreductase complex subunit C, found in Escherichia coli O7:K1 (strain IAI39 / ExPEC).